Reading from the N-terminus, the 134-residue chain is ATP synthase epsilon chain (134 aa).

It belongs to the ATPase epsilon chain family. In terms of assembly, F-type ATPases have 2 components, CF(1) - the catalytic core - and CF(0) - the membrane proton channel. CF(1) has five subunits: alpha(3), beta(3), gamma(1), delta(1), epsilon(1). CF(0) has three main subunits: a, b and c.

It localises to the cell inner membrane. Functionally, produces ATP from ADP in the presence of a proton gradient across the membrane. The chain is ATP synthase epsilon chain from Nitratidesulfovibrio vulgaris (strain DSM 19637 / Miyazaki F) (Desulfovibrio vulgaris).